The following is a 251-amino-acid chain: Copper transport protein CTR1 (251 aa).

Residues 90 to 110 form a helical membrane-spanning segment; it reads AFGIFVLLFFVAFLARMLEFV. The span at 157 to 173 shows a compositional bias: basic and acidic residues; it reads DESIDKQNSPQHEETTK. Positions 157 to 176 are disordered; the sequence is DESIDKQNSPQHEETTKARG. A helical transmembrane segment spans residues 208 to 228; that stretch reads MLAAMTYTLTYFFAVVIGSGV.

Oligomer.

It localises to the cell membrane. Required for high affinity copper (probably reduced Cu I) transport into the cell. The sequence is that of Copper transport protein CTR1 (CTR1) from Candida albicans (strain SC5314 / ATCC MYA-2876) (Yeast).